The following is a 249-amino-acid chain: 2,3-bisphosphoglycerate-dependent phosphoglycerate mutase (249 aa).

Substrate contacts are provided by residues 9–16 (RHGQSQWN), 22–23 (TG), Arg61, 88–91 (ERHY), Lys99, 115–116 (RR), and 184–185 (GN). His10 (tele-phosphohistidine intermediate) is an active-site residue. The Proton donor/acceptor role is filled by Glu88.

It belongs to the phosphoglycerate mutase family. BPG-dependent PGAM subfamily. In terms of assembly, homodimer.

It carries out the reaction (2R)-2-phosphoglycerate = (2R)-3-phosphoglycerate. Its pathway is carbohydrate degradation; glycolysis; pyruvate from D-glyceraldehyde 3-phosphate: step 3/5. Functionally, catalyzes the interconversion of 2-phosphoglycerate and 3-phosphoglycerate. The chain is 2,3-bisphosphoglycerate-dependent phosphoglycerate mutase from Xylella fastidiosa (strain 9a5c).